The primary structure comprises 1340 residues: Serine/threonine-protein phosphatase 7 long form homolog (1340 aa).

2 residues coordinate Mn(2+): Asp660 and His662. His722 functions as the Proton donor in the catalytic mechanism. His773 provides a ligand contact to Mn(2+). Disordered regions lie at residues 788 to 814 (QERNRKRKRTQKKQTDNTVLDTEDRSE), 1012 to 1093 (KSMD…SRTR), 1196 to 1218 (TDGAENLEPSTSKLNYSEPSEDI), and 1266 to 1340 (FTNL…DMDS). The span at 790-799 (RNRKRKRTQK) shows a compositional bias: basic residues. A compositionally biased stretch (acidic residues) spans 1018–1027 (EQMEVDEKDD). The segment covering 1049-1080 (GDRDMVDFSDKTENGSKEADHSETAEISKDLS) has biased composition (basic and acidic residues). The span at 1203–1213 (EPSTSKLNYSE) shows a compositional bias: polar residues. 2 stretches are compositionally biased toward basic and acidic residues: residues 1266 to 1289 (FTNLTKPSHDKGYGESADKPERVI) and 1318 to 1328 (DSVDSKNKGSL).

Belongs to the PPP phosphatase family. PP-7 subfamily. The cofactor is Mn(2+). In terms of tissue distribution, expressed in root tips, the shoot apical meristem (SAM), leaf vasculature, hydathodes and mature flowers.

The protein localises to the nucleus. It catalyses the reaction O-phospho-L-seryl-[protein] + H2O = L-seryl-[protein] + phosphate. The catalysed reaction is O-phospho-L-threonyl-[protein] + H2O = L-threonyl-[protein] + phosphate. Its function is as follows. Maybe required to maintain cell division activity in meristematic cells. In Arabidopsis thaliana (Mouse-ear cress), this protein is Serine/threonine-protein phosphatase 7 long form homolog.